We begin with the raw amino-acid sequence, 100 residues long: Urease subunit gamma (100 aa).

It belongs to the urease gamma subunit family. As to quaternary structure, heterotrimer of UreA (gamma), UreB (beta) and UreC (alpha) subunits. Three heterotrimers associate to form the active enzyme.

Its subcellular location is the cytoplasm. The catalysed reaction is urea + 2 H2O + H(+) = hydrogencarbonate + 2 NH4(+). It participates in nitrogen metabolism; urea degradation; CO(2) and NH(3) from urea (urease route): step 1/1. This chain is Urease subunit gamma, found in Acinetobacter baumannii (strain SDF).